The following is an 81-amino-acid chain: Sulfur carrier protein TusA (81 aa).

The active-site Cysteine persulfide intermediate is the C19.

This sequence belongs to the sulfur carrier protein TusA family. As to quaternary structure, interacts with IscS.

It is found in the cytoplasm. Its pathway is tRNA modification. Functionally, sulfur carrier protein involved in sulfur trafficking in the cell. Part of a sulfur-relay system required for 2-thiolation during synthesis of 2-thiouridine of the modified wobble base 5-methylaminomethyl-2-thiouridine (mnm(5)s(2)U) in tRNA. Interacts with IscS and stimulates its cysteine desulfurase activity. Accepts an activated sulfur from IscS, which is then transferred to TusD, and thus determines the direction of sulfur flow from IscS to 2-thiouridine formation. Also appears to be involved in sulfur transfer for the biosynthesis of molybdopterin. This is Sulfur carrier protein TusA from Escherichia coli (strain SMS-3-5 / SECEC).